The following is a 375-amino-acid chain: MFSVIKNDKHFNARVGFLNLPHGRVDIPCFMPVGTLGAMKGLKHAVLEKLECNLMLANTYHLYLRLGIKTVEKYVGLHNFTIWNKNFLTDSGGFRVFSFSDLRKIDLKGVHFKSHIDGSYHYFTSEGIFAMQEIFGSDIIMPLDICSSYGIDYNEANLYTNITTNWASSTFKSSKNRKEGYNGLLFLITQGNFFKDLRKRSINDILELDSPGIAIGGISVGEPREKYLEILEYSFLLIPKEKPRYVMGIGTPHYILNAIYYGIDIFDCFNPARITRHGSLLTDNGIMCIGRKEYKDDTSKVEKNCICTLCKRYSRGYLRHLIKSKELFGIVLASEHNIHYMFRLISKIRAAILNDDFLNFRTSYLKKYEEENFDE.

Asp90 acts as the Proton acceptor in catalysis. Residues 90 to 94 (DSGGF), Asp144, Gln190, and Gly217 contribute to the substrate site. The interval 248 to 254 (GIGTPHY) is RNA binding. Residue Asp267 is the Nucleophile of the active site. Residues 272–276 (ARITR) form an RNA binding; important for wobble base 34 recognition region. 4 residues coordinate Zn(2+): Cys305, Cys307, Cys310, and His336.

It belongs to the queuine tRNA-ribosyltransferase family. Homodimer. Within each dimer, one monomer is responsible for RNA recognition and catalysis, while the other monomer binds to the replacement base PreQ1. Requires Zn(2+) as cofactor.

It carries out the reaction 7-aminomethyl-7-carbaguanine + guanosine(34) in tRNA = 7-aminomethyl-7-carbaguanosine(34) in tRNA + guanine. Its pathway is tRNA modification; tRNA-queuosine biosynthesis. In terms of biological role, catalyzes the base-exchange of a guanine (G) residue with the queuine precursor 7-aminomethyl-7-deazaguanine (PreQ1) at position 34 (anticodon wobble position) in tRNAs with GU(N) anticodons (tRNA-Asp, -Asn, -His and -Tyr). Catalysis occurs through a double-displacement mechanism. The nucleophile active site attacks the C1' of nucleotide 34 to detach the guanine base from the RNA, forming a covalent enzyme-RNA intermediate. The proton acceptor active site deprotonates the incoming PreQ1, allowing a nucleophilic attack on the C1' of the ribose to form the product. After dissociation, two additional enzymatic reactions on the tRNA convert PreQ1 to queuine (Q), resulting in the hypermodified nucleoside queuosine (7-(((4,5-cis-dihydroxy-2-cyclopenten-1-yl)amino)methyl)-7-deazaguanosine). In Borreliella burgdorferi (strain ATCC 35210 / DSM 4680 / CIP 102532 / B31) (Borrelia burgdorferi), this protein is Queuine tRNA-ribosyltransferase.